A 222-amino-acid chain; its full sequence is Uracil-DNA glycosylase (222 aa).

Aspartate 61 serves as the catalytic Proton acceptor.

The protein belongs to the uracil-DNA glycosylase (UDG) superfamily. UNG family.

It localises to the cytoplasm. The enzyme catalyses Hydrolyzes single-stranded DNA or mismatched double-stranded DNA and polynucleotides, releasing free uracil.. Excises uracil residues from the DNA which can arise as a result of misincorporation of dUMP residues by DNA polymerase or due to deamination of cytosine. This Aeromonas hydrophila subsp. hydrophila (strain ATCC 7966 / DSM 30187 / BCRC 13018 / CCUG 14551 / JCM 1027 / KCTC 2358 / NCIMB 9240 / NCTC 8049) protein is Uracil-DNA glycosylase.